Here is a 263-residue protein sequence, read N- to C-terminus: uncharacterized protein (263 aa).

7 helical membrane passes run 1 to 21, 38 to 58, 82 to 102, 118 to 138, 151 to 171, 196 to 216, and 230 to 250; these read MLVI…ILCQ, LFLL…HYCY, IPIS…CMMV, GISI…IFTY, GKFG…ANLL, FALI…VIPT, and FWVK…VQYV.

It is found in the membrane. This is an uncharacterized protein from Saccharomyces cerevisiae (strain ATCC 204508 / S288c) (Baker's yeast).